A 670-amino-acid polypeptide reads, in one-letter code: Meiotic sister-chromatid recombination protein 6, mitochondrial (670 aa).

Residues 1–27 (MLFSRASKIRVSQLMRRLQSTAVGRAA) constitute a mitochondrion transit peptide.

Its subcellular location is the mitochondrion. Functionally, may be involved in the control of meiotic sister-chromatid recombination. In Eremothecium gossypii (strain ATCC 10895 / CBS 109.51 / FGSC 9923 / NRRL Y-1056) (Yeast), this protein is Meiotic sister-chromatid recombination protein 6, mitochondrial (MSC6).